A 349-amino-acid polypeptide reads, in one-letter code: B3 domain-containing protein At5g24050 (349 aa).

A DNA-binding region (TF-B3) is located at residues 240–341 (FNNLLRNDFL…ILCFAMEQSS (102 aa)).

It localises to the nucleus. The polypeptide is B3 domain-containing protein At5g24050 (Arabidopsis thaliana (Mouse-ear cress)).